The following is a 184-amino-acid chain: MKNLTDSFVYLGHWPSAGSFGFNTDILATNPINLSVVLGVLIFFGKGVLNDLLDNRKQRILNTIRNSDELREGAIQQLENARARLRKVETEADKFRVNGYSEIEREKLNLINSTDKTLKQLENYKNETILFEQQKTINQVRERVFQQALQGAIGTLNSCLNNELHLRTINANIGMFGTMKETTD.

The helical transmembrane segment at 27 to 49 (LATNPINLSVVLGVLIFFGKGVL) threads the bilayer.

The protein belongs to the ATPase B chain family. As to quaternary structure, F-type ATPases have 2 components, F(1) - the catalytic core - and F(0) - the membrane proton channel. F(1) has five subunits: alpha(3), beta(3), gamma(1), delta(1), epsilon(1). F(0) has four main subunits: a(1), b(1), b'(1) and c(10-14). The alpha and beta chains form an alternating ring which encloses part of the gamma chain. F(1) is attached to F(0) by a central stalk formed by the gamma and epsilon chains, while a peripheral stalk is formed by the delta, b and b' chains.

The protein localises to the plastid. It is found in the chloroplast thylakoid membrane. In terms of biological role, f(1)F(0) ATP synthase produces ATP from ADP in the presence of a proton or sodium gradient. F-type ATPases consist of two structural domains, F(1) containing the extramembraneous catalytic core and F(0) containing the membrane proton channel, linked together by a central stalk and a peripheral stalk. During catalysis, ATP synthesis in the catalytic domain of F(1) is coupled via a rotary mechanism of the central stalk subunits to proton translocation. Functionally, component of the F(0) channel, it forms part of the peripheral stalk, linking F(1) to F(0). The protein is ATP synthase subunit b, chloroplastic of Lepidium virginicum (Virginia pepperweed).